The following is a 756-amino-acid chain: Cilium assembly protein DZIP1L (756 aa).

The tract at residues 1–20 is disordered; sequence MLGQFSPGEPYTTSLSSTPP. A compositionally biased stretch (low complexity) spans 10 to 19; sequence PYTTSLSSTP. Positions 108–158 form a coiled coil; the sequence is DFLSSQLAGLEERLQAATSLVQQGEGQRAELEKSLQETKQENRRRKQLIAT. The C2H2-type zinc finger occupies 171 to 194; the sequence is HKCQFCEKSFVNYSYLQAHVQRRH. Composition is skewed to basic and acidic residues over residues 193–202, 237–262, 319–335, and 344–365; these read RHPEVTDAEK, NLRR…ERWK, DPEK…LRER, and RRKF…KSEN. Disordered stretches follow at residues 193–212, 233–262, 310–365, 409–466, 531–626, and 693–756; these read RHPE…EEME, QQAD…ERWK, NNAS…KSEN, KIKK…MRES, VKSL…AYIT, and IKTP…GTSA. 2 coiled-coil regions span residues 196–283 and 321–416; these read EVTD…FLQE and EKEM…LSAT. A compositionally biased stretch (polar residues) spans 534 to 558; that stretch reads LQKSSGKPTPNTLKQRGKKTSTPLN. Residues 560 to 578 are compositionally biased toward basic and acidic residues; the sequence is KSLRFRQDSKASDRREKSQ. Residues 586–598 are compositionally biased toward pro residues; it reads TPTPRSKAPPPNQ.

This sequence belongs to the DZIP C2H2-type zinc-finger protein family.

The protein localises to the cytoplasm. It localises to the cytoskeleton. Its subcellular location is the cilium basal body. It is found in the microtubule organizing center. The protein resides in the centrosome. The protein localises to the centriole. In terms of biological role, involved in primary cilium formation. Probably acts as a transition zone protein required for localization of PKD1/PC1 and PKD2/PC2 to the ciliary membrane. The protein is Cilium assembly protein DZIP1L (dzip1l) of Danio rerio (Zebrafish).